The following is a 141-amino-acid chain: Nucleoside diphosphate kinase (141 aa).

6 residues coordinate ATP: Lys-11, Phe-59, Arg-87, Thr-93, Arg-104, and Asn-114. His-117 functions as the Pros-phosphohistidine intermediate in the catalytic mechanism.

It belongs to the NDK family. As to quaternary structure, homotetramer. Mg(2+) is required as a cofactor.

Its subcellular location is the cytoplasm. It carries out the reaction a 2'-deoxyribonucleoside 5'-diphosphate + ATP = a 2'-deoxyribonucleoside 5'-triphosphate + ADP. The enzyme catalyses a ribonucleoside 5'-diphosphate + ATP = a ribonucleoside 5'-triphosphate + ADP. In terms of biological role, major role in the synthesis of nucleoside triphosphates other than ATP. The ATP gamma phosphate is transferred to the NDP beta phosphate via a ping-pong mechanism, using a phosphorylated active-site intermediate. In Delftia acidovorans (strain DSM 14801 / SPH-1), this protein is Nucleoside diphosphate kinase.